Here is a 585-residue protein sequence, read N- to C-terminus: SLAIN motif-containing protein-like (585 aa).

Disordered regions lie at residues 1-34 (MVVPDSGSDIQPADNGDTDKVMSNSEPELDPNLT), 55-125 (NQTL…RVEE), 324-365 (QDYA…EDEC), 402-476 (PRLS…SDGQ), and 492-585 (GSMS…DGCY). Positions 68-83 (GGTNNSNLKAGSNINN) are enriched in polar residues. Positions 327–345 (ASTSASRRSSSASLQSLRR) are enriched in low complexity. Acidic residues predominate over residues 351–365 (QEFDSYSQEDEEDEC). Composition is skewed to polar residues over residues 425 to 434 (PNLTPRTSLR), 441 to 476 (NSRSMEANLQSSGNRTSCLPHSPKGASSSRMRSDGQ), and 549 to 563 (ASPSSRTRLPQTPRS). Residues 575–585 (LTDESWKDGCY) show a composition bias toward basic and acidic residues.

The protein belongs to the SLAIN motif-containing family.

This is SLAIN motif-containing protein-like from Danio rerio (Zebrafish).